A 457-amino-acid chain; its full sequence is tRNA-2-methylthio-N(6)-dimethylallyladenosine synthase (457 aa).

Positions 3 to 120 (KKVYVKTFGC…LPQMIDARRA (118 aa)) constitute an MTTase N-terminal domain. 6 residues coordinate [4Fe-4S] cluster: cysteine 12, cysteine 49, cysteine 83, cysteine 157, cysteine 161, and cysteine 164. Positions 143–377 (RVEGPSAFVS…QATIEENVAR (235 aa)) constitute a Radical SAM core domain. Residues 380–447 (QSMVGKVERI…PHSLRGELVI (68 aa)) enclose the TRAM domain.

Belongs to the methylthiotransferase family. MiaB subfamily. Monomer. It depends on [4Fe-4S] cluster as a cofactor.

Its subcellular location is the cytoplasm. The enzyme catalyses N(6)-dimethylallyladenosine(37) in tRNA + (sulfur carrier)-SH + AH2 + 2 S-adenosyl-L-methionine = 2-methylsulfanyl-N(6)-dimethylallyladenosine(37) in tRNA + (sulfur carrier)-H + 5'-deoxyadenosine + L-methionine + A + S-adenosyl-L-homocysteine + 2 H(+). Catalyzes the methylthiolation of N6-(dimethylallyl)adenosine (i(6)A), leading to the formation of 2-methylthio-N6-(dimethylallyl)adenosine (ms(2)i(6)A) at position 37 in tRNAs that read codons beginning with uridine. In Burkholderia cenocepacia (strain ATCC BAA-245 / DSM 16553 / LMG 16656 / NCTC 13227 / J2315 / CF5610) (Burkholderia cepacia (strain J2315)), this protein is tRNA-2-methylthio-N(6)-dimethylallyladenosine synthase.